Here is a 340-residue protein sequence, read N- to C-terminus: UDP-N-acetylglucosamine--N-acetylmuramyl-(pentapeptide) pyrophosphoryl-undecaprenol N-acetylglucosamine transferase (340 aa).

Residues Thr15–Gly17, Asn127, Ser184, Ile230, and Gln275 contribute to the UDP-N-acetyl-alpha-D-glucosamine site.

Belongs to the glycosyltransferase 28 family. MurG subfamily.

It is found in the cell inner membrane. It catalyses the reaction di-trans,octa-cis-undecaprenyl diphospho-N-acetyl-alpha-D-muramoyl-L-alanyl-D-glutamyl-meso-2,6-diaminopimeloyl-D-alanyl-D-alanine + UDP-N-acetyl-alpha-D-glucosamine = di-trans,octa-cis-undecaprenyl diphospho-[N-acetyl-alpha-D-glucosaminyl-(1-&gt;4)]-N-acetyl-alpha-D-muramoyl-L-alanyl-D-glutamyl-meso-2,6-diaminopimeloyl-D-alanyl-D-alanine + UDP + H(+). Its pathway is cell wall biogenesis; peptidoglycan biosynthesis. Its function is as follows. Cell wall formation. Catalyzes the transfer of a GlcNAc subunit on undecaprenyl-pyrophosphoryl-MurNAc-pentapeptide (lipid intermediate I) to form undecaprenyl-pyrophosphoryl-MurNAc-(pentapeptide)GlcNAc (lipid intermediate II). This Vesicomyosocius okutanii subsp. Calyptogena okutanii (strain HA) protein is UDP-N-acetylglucosamine--N-acetylmuramyl-(pentapeptide) pyrophosphoryl-undecaprenol N-acetylglucosamine transferase.